A 145-amino-acid chain; its full sequence is Aklanonic acid methyl ester cyclase DnrD (145 aa).

Glutamine 106 contributes to the substrate binding site.

Belongs to the polyketide cyclase DnrD family. As to quaternary structure, homotetramer.

The enzyme catalyses methyl aklanonate = aklaviketone. The protein operates within antibiotic biosynthesis; daunorubicin biosynthesis. It functions in the pathway antibiotic biosynthesis; carminomycin biosynthesis. Its pathway is antibiotic biosynthesis; rhodomycin biosynthesis. It participates in antibiotic biosynthesis; aclacinomycin biosynthesis. Its function is as follows. Involved in the biosynthesis of aklavinone which is an important precursor common to the formation of the clinically significant anthracyclines such as carminomycin, daunorubicin (daunomycin), rhodomycin, aclacinomycin T (aklavin) and aclacinomycin A (aclarubicin). These compounds are aromatic polyketide antibiotics that exhibit high cytotoxicity and are widely applied in the chemotherapy of a variety of cancers. Catalyzes the cyclization of aklanonic acid methyl ester to yield aklaviketone presumably via an intramolecular aldol condensation mechanism, although water is not eliminated. The chain is Aklanonic acid methyl ester cyclase DnrD (dnrD) from Streptomyces peucetius.